The primary structure comprises 167 residues: MFSHVICKFLLTLSFITIIYAAKSESTINKPEKCGLKASSSSTVRIHYRSRVWGQEEYFESTYIREAPLEVKLGNGNLLKGIEDGIHGMCTGEIRRLLIPPNQAYGAIGIPNLVPPNTAIVVDVEMVNVNSPFSLWFWISGLILFSAFLLFGRKPIKGDTSNIKKKE.

Positions Met-1 to Ala-21 are cleaved as a signal peptide. Residues Ser-41 to Asn-130 form the PPIase FKBP-type domain. A helical transmembrane segment spans residues Pro-132–Gly-152.

It belongs to the FKBP-type PPIase family. FKBP2 subfamily.

It localises to the membrane. It carries out the reaction [protein]-peptidylproline (omega=180) = [protein]-peptidylproline (omega=0). Inhibited by both FK506 and rapamycin. Functionally, PPIases accelerate the folding of proteins. It catalyzes the cis-trans isomerization of proline imidic peptide bonds in oligopeptides. The protein is FK506-binding protein 2A (FKBP2) of Rhizopus delemar (strain RA 99-880 / ATCC MYA-4621 / FGSC 9543 / NRRL 43880) (Mucormycosis agent).